Here is a 259-residue protein sequence, read N- to C-terminus: Global transcriptional regulator CodY (259 aa).

The segment at 1–155 is GAF domain; that stretch reads MELLAKTRKL…SSTVVGMEIL (155 aa). The segment at residues 203–222 is a DNA-binding region (H-T-H motif); that stretch reads ASKIADRVGITRSVIVNALR. S215 is subject to Phosphoserine.

This sequence belongs to the CodY family.

The protein localises to the cytoplasm. Functionally, DNA-binding global transcriptional regulator which is involved in the adaptive response to starvation and acts by directly or indirectly controlling the expression of numerous genes in response to nutrient availability. During rapid exponential growth, CodY is highly active and represses genes whose products allow adaptation to nutrient depletion. This is Global transcriptional regulator CodY from Bacillus mycoides (strain KBAB4) (Bacillus weihenstephanensis).